Here is a 618-residue protein sequence, read N- to C-terminus: Sodium/iodide cotransporter (618 aa).

Residues 1 to 14 are Extracellular-facing; the sequence is MEGAEAGARATFGP. A helical membrane pass occupies residues 15 to 31; sequence WDYGVFATMLLVSTGIG. Residues 32 to 56 lie on the Cytoplasmic side of the membrane; that stretch reads LWVGLARGGQRSADDFFTGGRQLAA. The discontinuously helical transmembrane segment at 57-80 threads the bilayer; that stretch reads VPVGLSLAASFMSAVQVLGVPAEA. Residues Ser69, Val71, and Gln72 each coordinate Na(+). Residue Val76 participates in iodide binding. Topologically, residues 81 to 84 are extracellular; sequence ARYG. The helical transmembrane segment at 85–105 threads the bilayer; the sequence is LKFLWMCVGQLLNSLLTALLF. Position 90 (Met90) interacts with iodide. Residues 106–130 are Cytoplasmic-facing; the sequence is LPIFYRLGLTSTYQYLELRFSRAVR. The helical transmembrane segment at 131 to 157 threads the bilayer; that stretch reads LCGTLQYLVATMLYTGIVIYAPALILN. Residue Tyr144 participates in Na(+) binding. The Extracellular segment spans residues 158-163; that stretch reads QVTGLD. A helical membrane pass occupies residues 164–181; it reads IWASLLSTGIICTLYTTV. Residues 182–189 lie on the Cytoplasmic side of the membrane; the sequence is GGMKAVVW. A helical transmembrane segment spans residues 190-208; it reads TDVFQVVVMLVGFWVILAR. Residues 209-243 are Extracellular-facing; it reads GVMLMGGPWNVLSLAQNHSRINLMDFDPDPRSRYT. The discontinuously helical transmembrane segment at 244-266 threads the bilayer; it reads FWTFVVGGSLVWLSMYGVNQAQV. Iodide is bound at residue Trp255. Na(+) is bound at residue Met258. The Cytoplasmic segment spans residues 267–278; that stretch reads QRYVACHTERKA. The helical transmembrane segment at 279–301 threads the bilayer; it reads KLALLVNQLGLFLIVASAACCGI. The Extracellular segment spans residues 302–335; sequence VMFVYYKDCDPLLTGRIAAPDQYMPLLVLDIFED. The helical transmembrane segment at 336 to 363 threads the bilayer; it reads LPGVPGLFLACAYSGTLSTASTSINAMA. Residues 364-386 lie on the Cytoplasmic side of the membrane; sequence AVTVEDLIKPRMPSLAPRKLVFI. Residues 387 to 408 form a helical membrane-spanning segment; that stretch reads SKGLSFIYGSTCLTVAALSSLL. At 409–411 the chain is on the extracellular side; the sequence is GGG. The chain crosses the membrane as a helical span at residues 412–437; the sequence is VLQGSFTVMGVISGPLLGAFTLGMLL. Leu413 provides a ligand contact to iodide. Residues Ser416 and Phe417 each coordinate Na(+). Iodide is bound at residue Phe417. Residues 438–441 lie on the Cytoplasmic side of the membrane; the sequence is PACN. A helical membrane pass occupies residues 442–465; sequence TPGVLSGLTAGLAVSLWVAVGATL. The Extracellular portion of the chain corresponds to 466–520; sequence YPPGEQTMGVLPTSAAGCTNASVLPSPPGAANTSRGIPSSGMDSGRPAFADTFYA. Asn485 and Asn497 each carry an N-linked (GlcNAc...) asparagine glycan. The helical transmembrane segment at 521 to 545 threads the bilayer; that stretch reads VSYLYYGALGTLTTMLCGALISYLT. Over 546–618 the chain is Cytoplasmic; the sequence is GPTKRSSLGP…YLGHDVETNL (73 aa). Ser551 carries the phosphoserine; by PKA modification. Basic and acidic residues predominate over residues 571–587; it reads PKEDTTTLEDSLVKGPE. The segment at 571–618 is disordered; it reads PKEDTTTLEDSLVKGPEDIPAATKKPPGFRPEAETHPLYLGHDVETNL.

Belongs to the sodium:solute symporter (SSF) (TC 2.A.21) family. In terms of assembly, monomer. Post-translationally, glycosylated.

It is found in the cell membrane. The protein localises to the cytoplasm. The catalysed reaction is iodide(out) + 2 Na(+)(out) = iodide(in) + 2 Na(+)(in). It catalyses the reaction chlorate(out) + 2 Na(+)(out) = chlorate(in) + 2 Na(+)(in). The enzyme catalyses thiocyanate(out) + 2 Na(+)(out) = thiocyanate(in) + 2 Na(+)(in). It carries out the reaction nitrate(out) + 2 Na(+)(out) = nitrate(in) + 2 Na(+)(in). The catalysed reaction is selenocyanate(out) + 2 Na(+)(out) = selenocyanate(in) + 2 Na(+)(in). Perchlorate inhibits iodide transport activity. Oxyanions inhibit iodide transport activity by blocking the binding sites for iodide and one of the sodium ions. Its function is as follows. Sodium:iodide symporter that mediates the transport of iodide into the thyroid gland. Can also mediate the transport of chlorate, thiocynate, nitrate and selenocynate. This Mus musculus (Mouse) protein is Sodium/iodide cotransporter (Slc5a5).